The primary structure comprises 100 residues: Urease subunit gamma (100 aa).

This sequence belongs to the urease gamma subunit family. In terms of assembly, heterotrimer of UreA (gamma), UreB (beta) and UreC (alpha) subunits. Three heterotrimers associate to form the active enzyme.

The protein resides in the cytoplasm. The enzyme catalyses urea + 2 H2O + H(+) = hydrogencarbonate + 2 NH4(+). It participates in nitrogen metabolism; urea degradation; CO(2) and NH(3) from urea (urease route): step 1/1. The polypeptide is Urease subunit gamma (Paraburkholderia phytofirmans (strain DSM 17436 / LMG 22146 / PsJN) (Burkholderia phytofirmans)).